We begin with the raw amino-acid sequence, 509 residues long: Transcription factor atf-7 (509 aa).

The segment covering 283–303 has biased composition (polar residues); that stretch reads TVSSYHSPLGASSQPPSTQKS. 2 disordered regions span residues 283 to 318 and 337 to 400; these read TVSS…EKQI and NMSS…ILER. Residues 308–318 are compositionally biased toward basic and acidic residues; the sequence is SWDHINGEKQI. The span at 337–364 shows a compositional bias: low complexity; the sequence is NMSSSGSDQDQSADMSNAGSTASTSTGN. The segment covering 390-400 has biased composition (basic and acidic residues); the sequence is PDERRNTILER. Residues 391–464 enclose the bZIP domain; it reads DERRNTILER…TERESRCVCL (74 aa). The tract at residues 393 to 413 is basic motif; it reads RRNTILERNKAAAVRYRKRKK. A leucine-zipper region spans residues 419 to 450; that stretch reads MMGRVQAMEAEKNQLLAIQTQNQVLRRELERV.

This sequence belongs to the bZIP family. In terms of assembly, interacts with serine/threonine kinase pmk-1; perhaps in a manner dependent on dual specificity protein kinase sek-1. In terms of tissue distribution, expressed in intestinal cells.

Its subcellular location is the nucleus. The protein localises to the chromosome. Transcription factor which regulates the transcription of various genes, including those involved in innate immunity and oxidative stress responses. Binds to promoter regions of genes, probably at 5'-[GACGTCA]-3' consensus sequences. Together with transcription factor daf-19, involved in regulation of the serotonergic response of ADF neurons to pathogenic food. Modulates response to infection by the Gram-negative bacterium P.aeruginosa, acting downstream of the p38 signal transduction pathway effector serine/threonine kinase pmk-1. May act with transcription factor elt-2 to control p38 gene induction in response to bacterial infection. May be phosphorylated by pmk-1. Regulates transcription of the metallothionein gene, mtl-1, perhaps acting downstream of pmk-1. This Caenorhabditis elegans protein is Transcription factor atf-7.